Reading from the N-terminus, the 427-residue chain is Amino acid transporter AVT3A (427 aa).

The segment at 1 to 35 (MRYDQEAGSSSHSLPSGSSSHSLPPTEDTPLLGPR) is disordered. Topologically, residues 1-42 (MRYDQEAGSSSHSLPSGSSSHSLPPTEDTPLLGPRTLSSQPK) are cytoplasmic. Residues 8 to 24 (GSSSHSLPSGSSSHSLP) show a composition bias toward low complexity. A helical transmembrane segment spans residues 43–63 (TFANVFIAIVGAGVLGLPYTF). Over 64–69 (KKTGWL) the chain is Vacuolar. The chain crosses the membrane as a helical span at residues 70–90 (LGLLTLLFVSSLTFFCMMLLV). The Cytoplasmic segment spans residues 91-122 (HTRRKLESLSGFNSITSFGDLGESVCGPAGRL). The chain crosses the membrane as a helical span at residues 123–143 (VVDVMLVLSQSGFCVSYLIFV). Topologically, residues 144-157 (ATTMANLLSRGTEH) are vacuolar. A helical transmembrane segment spans residues 158-178 (ILGLDAASIYLWGCFPFQLGL). Over 179–186 (NSIPSLTH) the chain is Cytoplasmic. A helical membrane pass occupies residues 187–207 (LAPLSIFADIVDVAATLVVMV). Residues 208–227 (QDVFIFLKRRPPLRVFGGVS) are Vacuolar-facing. A helical transmembrane segment spans residues 228–248 (VFFYGLGVAVYAFEGIGMVLP). The Cytoplasmic portion of the chain corresponds to 249 to 262 (LELEAKYKDKFGRA). Residues 263 to 283 (LGLAMGLISIMYGAFGLLGYM) traverse the membrane as a helical segment. Topologically, residues 284–300 (AYGEETKDIITTNLGTG) are vacuolar. Residues 301–321 (VVSTLVQLGLAINLFFTFPLM) form a helical membrane-spanning segment. The Cytoplasmic portion of the chain corresponds to 322–339 (MQPVYEVVERRLCSSRYS). The helical transmembrane segment at 340–360 (VWVRWATVLVVTLVALLVPNF) threads the bilayer. At 361 to 362 (AD) the chain is on the vacuolar side. The helical transmembrane segment at 363-383 (FLSLVGSSVCVVLGFVLPSLF) threads the bilayer. Residues 384-396 (HLQAFKNELSITR) are Cytoplasmic-facing. A helical membrane pass occupies residues 397-417 (IVVDVLVFLIGVMIAITGTWT). The Vacuolar segment spans residues 418-427 (AVHEILTSKA).

This sequence belongs to the amino acid/polyamine transporter 2 family. Amino acid/auxin permease (AAAP) (TC 2.A.18.8) subfamily. In terms of tissue distribution, ubiquitous.

It is found in the vacuole membrane. Functionally, translocates preferentially neutral amino acids and to a lesser extent aromatic amino acids from the vacuole to the cytoplasm. Requires ATP for function. The chain is Amino acid transporter AVT3A from Arabidopsis thaliana (Mouse-ear cress).